Consider the following 501-residue polypeptide: Lysine--tRNA ligase (501 aa).

Mg(2+) is bound by residues glutamate 411 and glutamate 418.

The protein belongs to the class-II aminoacyl-tRNA synthetase family. In terms of assembly, homodimer. Requires Mg(2+) as cofactor.

The protein localises to the cytoplasm. The enzyme catalyses tRNA(Lys) + L-lysine + ATP = L-lysyl-tRNA(Lys) + AMP + diphosphate. In Clostridium perfringens (strain SM101 / Type A), this protein is Lysine--tRNA ligase.